Here is a 178-residue protein sequence, read N- to C-terminus: Enhancer of split m5 protein (178 aa).

In terms of domain architecture, bHLH spans Tyr18–Gln73. An Orange domain is found at Phe89–Leu122. Positions Val135–Ala165 are enriched in polar residues. The tract at residues Val135–Trp178 is disordered. The span at Pro169–Trp178 shows a compositional bias: basic and acidic residues. Residues Trp175–Trp178 carry the WRPW motif motif.

As to quaternary structure, transcription repression requires formation of a complex with a corepressor protein (Groucho). Forms homodimers.

Its subcellular location is the nucleus. Participates in the control of cell fate choice by uncommitted neuroectodermal cells in the embryo. Transcriptional repressor. Binds DNA on N-box motifs: 5'-CACNAG-3'. This is Enhancer of split m5 protein from Drosophila melanogaster (Fruit fly).